We begin with the raw amino-acid sequence, 273 residues long: MERSVFYVSDGTAITAEVLGHAVLSQFPVNTVSYTLPFVESEVRAKAVCEQINTLYQQTGVRPLVFYSIVTPTVRNIITSSDGFCQDIVQALVAPLQEELNIPPTPVANRTHGLTANNLGKYDARIAAIDYTLAHDDGISLRNLDQAQVILLGVSRCGKTPTSLYLAMQFGIRAANYPFIADDMDNLRLPDALKPFQHKLFGLTIDAERLAAIREERRGNSRYASLRQCRMELNEVEALFRKHQIKYLNTTNYSVEEISAKIIDILGMSRRMY.

153-160 (GVSRCGKT) contacts ADP.

Belongs to the pyruvate, phosphate/water dikinase regulatory protein family. PSRP subfamily.

The enzyme catalyses [pyruvate, water dikinase] + ADP = [pyruvate, water dikinase]-phosphate + AMP + H(+). It catalyses the reaction [pyruvate, water dikinase]-phosphate + phosphate + H(+) = [pyruvate, water dikinase] + diphosphate. Bifunctional serine/threonine kinase and phosphorylase involved in the regulation of the phosphoenolpyruvate synthase (PEPS) by catalyzing its phosphorylation/dephosphorylation. This is Putative phosphoenolpyruvate synthase regulatory protein from Pectobacterium atrosepticum (strain SCRI 1043 / ATCC BAA-672) (Erwinia carotovora subsp. atroseptica).